The following is a 490-amino-acid chain: Glutamate--tRNA ligase (490 aa).

Residues 9-19 (PSPTGLQHIGG) carry the 'HIGH' region motif. The short motif at 251–255 (KLSKR) is the 'KMSKS' region element. Lys-254 contacts ATP.

It belongs to the class-I aminoacyl-tRNA synthetase family. Glutamate--tRNA ligase type 1 subfamily. In terms of assembly, monomer.

The protein resides in the cytoplasm. It carries out the reaction tRNA(Glu) + L-glutamate + ATP = L-glutamyl-tRNA(Glu) + AMP + diphosphate. Functionally, catalyzes the attachment of glutamate to tRNA(Glu) in a two-step reaction: glutamate is first activated by ATP to form Glu-AMP and then transferred to the acceptor end of tRNA(Glu). In Borreliella burgdorferi (strain ATCC 35210 / DSM 4680 / CIP 102532 / B31) (Borrelia burgdorferi), this protein is Glutamate--tRNA ligase.